A 241-amino-acid polypeptide reads, in one-letter code: MEEQPRERSEAGAEACEEKRGLSQAAEERIEDRISLLLRLRAQTKQQLLEYKSMIDTNEEKTPEQIMQEKQIEVKIEELENEIEDVKSNIEMKSLALSRMKLSVALRDNMENMGPENCVLTDDMKHILKLQKLIMKSQEESSELEKKLLDVRKKRLQLKQASRSKLLEIQIEKNKQKEDVDKMENSEMIKTMKKKLQTEIKITTVVQHTFQGLILASKTNWAEDPALRETVLQLEKDLNTL.

M1 carries the post-translational modification N-acetylmethionine. Positions 1–24 are disordered; it reads MEEQPRERSEAGAEACEEKRGLSQ. A coiled-coil region spans residues 28–186; sequence ERIEDRISLL…KEDVDKMENS (159 aa). Residue K61 forms a Glycyl lysine isopeptide (Lys-Gly) (interchain with G-Cter in SUMO2) linkage. Position 62 is a phosphothreonine (T62).

This sequence belongs to the CENP-H/MCM16 family. Self-associates. Component of the CENPA-NAC complex, at least composed of CENPA, CENPC, CENPH, CENPM, CENPN, CENPT and CENPU. The CENPA-NAC complex interacts with the CENPA-CAD complex, composed of CENPI, CENPK, CENPL, CENPO, CENPP, CENPQ, CENPR and CENPS. Interacts directly with CENPK. Interacts with KIF2C and NDC80. Interacts with TRIM36. Abundantly expressed in thymus, spleen, uterus, ovary, testis and muscle, and weakly expressed in small intestine, lung and stomach. Barely detectable expression in kidney, liver, skin and prostate gland. Not detected in brain, heart or adrenal gland. Also expressed weakly in various hematopoietic cell lines.

Its subcellular location is the nucleus. The protein resides in the chromosome. It localises to the centromere. It is found in the kinetochore. Functionally, component of the CENPA-NAC (nucleosome-associated) complex, a complex that plays a central role in assembly of kinetochore proteins, mitotic progression and chromosome segregation. The CENPA-NAC complex recruits the CENPA-CAD (nucleosome distal) complex and may be involved in incorporation of newly synthesized CENPA into centromeres. Required for chromosome congression and efficiently align the chromosomes on a metaphase plate. This chain is Centromere protein H, found in Mus musculus (Mouse).